We begin with the raw amino-acid sequence, 603 residues long: Proline--tRNA ligase (603 aa).

It belongs to the class-II aminoacyl-tRNA synthetase family. ProS type 1 subfamily. As to quaternary structure, homodimer.

Its subcellular location is the cytoplasm. The enzyme catalyses tRNA(Pro) + L-proline + ATP = L-prolyl-tRNA(Pro) + AMP + diphosphate. In terms of biological role, catalyzes the attachment of proline to tRNA(Pro) in a two-step reaction: proline is first activated by ATP to form Pro-AMP and then transferred to the acceptor end of tRNA(Pro). As ProRS can inadvertently accommodate and process non-cognate amino acids such as alanine and cysteine, to avoid such errors it has two additional distinct editing activities against alanine. One activity is designated as 'pretransfer' editing and involves the tRNA(Pro)-independent hydrolysis of activated Ala-AMP. The other activity is designated 'posttransfer' editing and involves deacylation of mischarged Ala-tRNA(Pro). The misacylated Cys-tRNA(Pro) is not edited by ProRS. The sequence is that of Proline--tRNA ligase from Paenarthrobacter aurescens (strain TC1).